A 167-amino-acid polypeptide reads, in one-letter code: Endoribonuclease YbeY (167 aa).

Zn(2+) contacts are provided by His-132, His-136, and His-142.

Belongs to the endoribonuclease YbeY family. Requires Zn(2+) as cofactor.

Its subcellular location is the cytoplasm. Functionally, single strand-specific metallo-endoribonuclease involved in late-stage 70S ribosome quality control and in maturation of the 3' terminus of the 16S rRNA. The protein is Endoribonuclease YbeY of Clostridium beijerinckii (strain ATCC 51743 / NCIMB 8052) (Clostridium acetobutylicum).